The chain runs to 323 residues: tRNA-modifying protein YgfZ (323 aa).

Folate contacts are provided by Trp29 and Trp182.

It belongs to the tRNA-modifying YgfZ family.

It localises to the cytoplasm. In terms of biological role, folate-binding protein involved in regulating the level of ATP-DnaA and in the modification of some tRNAs. It is probably a key factor in regulatory networks that act via tRNA modification, such as initiation of chromosomal replication. In Vibrio atlanticus (strain LGP32) (Vibrio splendidus (strain Mel32)), this protein is tRNA-modifying protein YgfZ.